We begin with the raw amino-acid sequence, 330 residues long: MKKSFIHQQEEISFVKNTFTQYLIAKLDVVEVQGPILSRVGDGMQDNLSGTENPVSVNVLKIPNATFEVVHSLAKWKRHTLARFGFNEGEGLVVNMKALRPDEDSLDQTHSVYVDQWDWEKVIPDGKRNLAYLKETVETIYKVIRLTELAVEARYDIEAVLPKKITFIHTEELVAKYPDLTPKERENAITKVFGAVFLIGIGGVLPDGKPHDGRAPDYDDWTTETENGYHGLNGDILVWNDQLGSAFELSSMGIRVDEEALKRQVEMTGDQDRLAFDWHKSLLNGLFPLTIGGGIGQSRMVMFLLRKQHIGEVQTSVWPQEVRDSYDNIL.

This sequence belongs to the class-II aminoacyl-tRNA synthetase family. AsnA subfamily.

Its subcellular location is the cytoplasm. It catalyses the reaction L-aspartate + NH4(+) + ATP = L-asparagine + AMP + diphosphate + H(+). The protein operates within amino-acid biosynthesis; L-asparagine biosynthesis; L-asparagine from L-aspartate (ammonia route): step 1/1. The chain is Aspartate--ammonia ligase from Streptococcus pyogenes serotype M2 (strain MGAS10270).